Here is an 800-residue protein sequence, read N- to C-terminus: Phenylalanine--tRNA ligase beta subunit (800 aa).

The tRNA-binding domain occupies 39-154; it reads TKDIKNLVVG…ESQVPGTDAL (116 aa). The 76-residue stretch at 408-483 folds into the B5 domain; it reads AFITPIDITA…RIYGYDDIPS (76 aa). Mg(2+)-binding residues include Asp461, Asp467, Glu470, and Glu471. Positions 708-800 constitute an FDX-ACB domain; it reads PRFPGMSRDI…ALIEQGAVIR (93 aa).

It belongs to the phenylalanyl-tRNA synthetase beta subunit family. Type 1 subfamily. Tetramer of two alpha and two beta subunits. The cofactor is Mg(2+).

It is found in the cytoplasm. The catalysed reaction is tRNA(Phe) + L-phenylalanine + ATP = L-phenylalanyl-tRNA(Phe) + AMP + diphosphate + H(+). In Staphylococcus aureus (strain MRSA252), this protein is Phenylalanine--tRNA ligase beta subunit.